A 206-amino-acid chain; its full sequence is Uridine kinase (206 aa).

9–16 (GGSGSGKT) is a binding site for ATP.

This sequence belongs to the uridine kinase family.

The protein localises to the cytoplasm. It catalyses the reaction uridine + ATP = UMP + ADP + H(+). The enzyme catalyses cytidine + ATP = CMP + ADP + H(+). Its pathway is pyrimidine metabolism; CTP biosynthesis via salvage pathway; CTP from cytidine: step 1/3. The protein operates within pyrimidine metabolism; UMP biosynthesis via salvage pathway; UMP from uridine: step 1/1. This chain is Uridine kinase, found in Borrelia garinii subsp. bavariensis (strain ATCC BAA-2496 / DSM 23469 / PBi) (Borreliella bavariensis).